The primary structure comprises 307 residues: Probable porphobilinogen deaminase (307 aa).

Cys240 carries the post-translational modification S-(dipyrrolylmethanemethyl)cysteine.

This sequence belongs to the HMBS family. The cofactor is dipyrromethane.

It catalyses the reaction 4 porphobilinogen + H2O = hydroxymethylbilane + 4 NH4(+). It functions in the pathway porphyrin-containing compound metabolism; protoporphyrin-IX biosynthesis; coproporphyrinogen-III from 5-aminolevulinate: step 2/4. Functionally, tetrapolymerization of the monopyrrole PBG into the hydroxymethylbilane pre-uroporphyrinogen in several discrete steps. The chain is Probable porphobilinogen deaminase (hemC) from Aeropyrum pernix (strain ATCC 700893 / DSM 11879 / JCM 9820 / NBRC 100138 / K1).